The sequence spans 720 residues: Nucleolar protein 11 (720 aa).

Residues 365–392 form a disordered region; it reads KDPETKPSNAGAQKKTRERKTNANAGNG.

It localises to the nucleus. The protein resides in the nucleolus. Ribosome biogenesis factor. May be required for both optimal rDNA transcription and pre-rRNA processing. This is Nucleolar protein 11 (nol11) from Xenopus laevis (African clawed frog).